A 141-amino-acid polypeptide reads, in one-letter code: Lutropin subunit beta (141 aa).

Residues 1–20 (MERLQGLLLWLLLSPSVVWA) form the signal peptide. 5 disulfides stabilise this stretch: Cys29–Cys77, Cys43–Cys92, Cys54–Cys108, Cys58–Cys110, and Cys113–Cys120. Residue Asn33 is glycosylated (N-linked (GlcNAc...) asparagine).

This sequence belongs to the glycoprotein hormones subunit beta family. Heterodimer of a common alpha chain and a unique beta chain which confers biological specificity to thyrotropin, lutropin, follitropin and gonadotropin.

The protein localises to the secreted. Functionally, promotes spermatogenesis and ovulation by stimulating the testes and ovaries to synthesize steroids. In Mus musculus (Mouse), this protein is Lutropin subunit beta (Lhb).